We begin with the raw amino-acid sequence, 82 residues long: ATP synthase subunit c (82 aa).

2 helical membrane-spanning segments follow: residues 7–27 and 53–73; these read LVAL…CIGI and FLLA…AMLF.

This sequence belongs to the ATPase C chain family. As to quaternary structure, F-type ATPases have 2 components, F(1) - the catalytic core - and F(0) - the membrane proton channel. F(1) has five subunits: alpha(3), beta(3), gamma(1), delta(1), epsilon(1). F(0) has three main subunits: a(1), b(2) and c(10-14). The alpha and beta chains form an alternating ring which encloses part of the gamma chain. F(1) is attached to F(0) by a central stalk formed by the gamma and epsilon chains, while a peripheral stalk is formed by the delta and b chains.

The protein resides in the cell inner membrane. In terms of biological role, f(1)F(0) ATP synthase produces ATP from ADP in the presence of a proton or sodium gradient. F-type ATPases consist of two structural domains, F(1) containing the extramembraneous catalytic core and F(0) containing the membrane proton channel, linked together by a central stalk and a peripheral stalk. During catalysis, ATP synthesis in the catalytic domain of F(1) is coupled via a rotary mechanism of the central stalk subunits to proton translocation. Key component of the F(0) channel; it plays a direct role in translocation across the membrane. A homomeric c-ring of between 10-14 subunits forms the central stalk rotor element with the F(1) delta and epsilon subunits. This Leptothrix cholodnii (strain ATCC 51168 / LMG 8142 / SP-6) (Leptothrix discophora (strain SP-6)) protein is ATP synthase subunit c.